Consider the following 283-residue polypeptide: MKAKVIDGSRASARIREQLKERVACLRARNIRPGLAVLLVGEDPASQVYVRNKVAACEQVGIHSVTERYPSAWTENQLLDRIASLHGDPAINGILVQLPLPPHMSAHRVIEAISPLKDVDGFHISNAGLLMTGKPQFQPCTPYGVMKLLESEGVSLRGAEAVIVGASNIVGKPMAMLLLAAGATVTICNSKTRDLAGQARRADVLIVAAGRAGIVDGSMIKPGAVVIDVGINRSPDGRLCGDVDYGSAAKVAGAITPVPGGVGPMTIAMLLANTVEAAERSAI.

Residues 165–167 (GAS), Ser-190, and Ile-231 each bind NADP(+).

It belongs to the tetrahydrofolate dehydrogenase/cyclohydrolase family. In terms of assembly, homodimer.

It catalyses the reaction (6R)-5,10-methylene-5,6,7,8-tetrahydrofolate + NADP(+) = (6R)-5,10-methenyltetrahydrofolate + NADPH. It carries out the reaction (6R)-5,10-methenyltetrahydrofolate + H2O = (6R)-10-formyltetrahydrofolate + H(+). Its pathway is one-carbon metabolism; tetrahydrofolate interconversion. Catalyzes the oxidation of 5,10-methylenetetrahydrofolate to 5,10-methenyltetrahydrofolate and then the hydrolysis of 5,10-methenyltetrahydrofolate to 10-formyltetrahydrofolate. The protein is Bifunctional protein FolD 2 of Bordetella pertussis (strain Tohama I / ATCC BAA-589 / NCTC 13251).